The chain runs to 739 residues: MDSRPQKIWMAPSLTESDMDYHKILTAGLSVQQGIVRQRVIPVYQVNNLEEICQLIIQAFEAGVDFQESADSFLLMLCLHHAYQGDYKLFLESGAVKYLEGHGFRFEVKKRDGVKRLEELLPAVSSGKNIKRTLAAMPEEETTEANAGQFLSFASLFLPKLVVGEKACLEKVQRQIQVHAEQGLIQYPTAWQSVGHMMVIFRLMRTNFLIKFLLIHQGMHMVAGHDANDAVISNSVAQARFSGLLIVKTVLDHILQKTERGVRLHPLARTAKVKNEVNSFKAALSSLAKHGEYAPFARLLNLSGVNNLEHGLFPQLSAIALGVATAHGSTLAGVNVGEQYQQLREAATEAEKQLQQYAESRELDHLGLDDQEKKILMNFHQKKNEISFQQTNAMVTLRKERLAKLTEAITAASLPKTSGHYDDDDDIPFPGPINDDDNPGHQDDDPTDSQDTTIPDVVVDPDDGSYGEYQSYSENGMNAPDDLVLFDLDEDDEDTKPVPNRSTKGGQQKNSQKGQHIEGRQTQSRPIQNVPGPHRTIHHASAPLTDNDRRNEPSGSTSPRMLTPINEEADPLDDADDETSSLPPLESDDEEQDRDGTSNRTPTVAPPAPVYRDHSEKKELPQDEQQDQDHTQEARNQDSDNTQSEHSFEEMYRHILRSQGPFDAVLYYHMMKDEPVVFSTSDGKEYTYPDSLEEEYPPWLTEKEAMNEENRFVTLDGQQFYWPVMNHKNKFMAILQHHQ.

The interval 1–25 (MDSRPQKIWMAPSLTESDMDYHKIL) is oligomerization, N-terminal arm. The interval 26–405 (TAGLSVQQGI…TLRKERLAKL (380 aa)) is NP core. Residues 415-647 (PKTSGHYDDD…DSDNTQSEHS (233 aa)) form a disordered region. 2 stretches are compositionally biased toward low complexity: residues 449 to 458 (SQDTTIPDVV) and 504 to 514 (KGGQQKNSQKG). Positions 562-567 (LTPINE) match the Host PPP2R5C-binding motif motif. Residues 567 to 579 (EEADPLDDADDET) are compositionally biased toward acidic residues. The VP30-binding motif motif lies at 606 to 611 (PPAPVY). A compositionally biased stretch (basic and acidic residues) spans 611 to 638 (YRDHSEKKELPQDEQQDQDHTQEARNQD).

Belongs to the filoviruses nucleoprotein family. As to quaternary structure, homooligomer. Homomultimerizes to form the nucleocapsid. Binds to viral genomic RNA. Interacts with VP35 and VP30 to form the nucleocapsid. Interacts with host PPP2R5C; this interaction leads to VP30 dephosphorylation and viral transcription. Interacts with VP24; this interaction facilitates nucleocapsid assembly and genome packaging. Interacts with matrix protein VP40; this interaction allows recruitment of the nucleocapsid into progeny virions. Interacts with host STAU1. Interacts with host NXF1 (via RNA-binding domain); this interaction recruits NXF1 to the inclusion bodies were viral replication takes place, probably to export viral mRNA-NXF1 complexes from these sites. Interacts with host CCDC92; this interaction sequesters NP in the host cytoplasm. Interacts with host TRIM14. In terms of processing, phosphorylated by host. Post-translationally, O-glycosylated by host. Acetylated by host EP300 in vitro.

The protein resides in the virion. It is found in the host cytoplasm. Its function is as follows. Oligomerizes into helical capsid to encapsidate the viral genome, protecting it from nucleases and the cellular innate immune response. VP35 binds to and stabilizes monomeric NP, keeping it soluble. Upon virus replication, NP is recruited to bind cooperatively viral genomic RNA and VP35 is released. The encapsidated genomic RNA is termed the nucleocapsid and serves as template for transcription and replication. The nucleocapsid is helical with a pitch of 10.81 NP per turn and a diameter of about 22nm. Each NP binds to six nucleotides of viral genomic RNA, three being exposed to the solvant and three hidden into the nucleocapsid. Also recruits host PPP2R5C phosphatase to dephosphorylate VP30 and thereby promote viral transcription. Upon virion assembly and budding, NP binds to VP24 and possibly host STAU1. The protein is Nucleoprotein (NP) of Epomops franqueti (Franquet's epauletted fruit bat).